Here is a 450-residue protein sequence, read N- to C-terminus: Gastrin/cholecystokinin type B receptor (450 aa).

Residues 1–57 (MELLKLNSSVQGPGPGSGSSLCHPGVSLLNSSSAGNLSCEPPRIRGTGTRELELAIR) lie on the Extracellular side of the membrane. Asn7, Asn30, and Asn36 each carry an N-linked (GlcNAc...) asparagine glycan. The helical transmembrane segment at 58–79 (ITLYAVIFLMSIGGNMLIIVVL) threads the bilayer. The Cytoplasmic segment spans residues 80–87 (GLSRRLRT). The chain crosses the membrane as a helical span at residues 88 to 109 (VTNAFLLSLAVSDLLLAVACMP). The Extracellular segment spans residues 110–131 (FTLLPNLMGTFIFGTVICKAVS). The cysteines at positions 127 and 205 are disulfide-linked. The chain crosses the membrane as a helical span at residues 132–150 (YLMGVSVSVSTLNLVAIAL). Over 151-170 (ERYSAICRPLQARVWQTRSH) the chain is Cytoplasmic. Residues 171 to 189 (AARVILATWLLSGLLMVPY) traverse the membrane as a helical segment. The Extracellular segment spans residues 190-219 (PVYTVVQPVGPRVLQCMHRWPSARVRQTWS). Residues 220-242 (VLLLMLLFFIPGVVMAVAYGLIS) traverse the membrane as a helical segment. The Cytoplasmic segment spans residues 243–336 (RELYLGLRFD…KLLAKKRVVR (94 aa)). The tract at residues 258–277 (DTQSRVRNQGGLPGGTAPGP) is disordered. The chain crosses the membrane as a helical span at residues 337 to 358 (MLLVIVLLFFLCWLPIYSANTW). Residues 359–376 (CAFDGPGAHRALSGAPIS) are Extracellular-facing. A helical transmembrane segment spans residues 377–397 (FIHLLSYASACVNPLVYCFMH). The Cytoplasmic portion of the chain corresponds to 398-450 (RRFRQACLDTCARCCPRPPRARPRPLPDEDPPTPSIASLSRLSYTTISTLGPG). Residue Cys411 is the site of S-palmitoyl cysteine attachment.

This sequence belongs to the G-protein coupled receptor 1 family. As to expression, stomach and brain.

It localises to the cell membrane. Functionally, receptor for gastrin and cholecystokinin. The CCK-B receptors occur throughout the central nervous system where they modulate anxiety, analgesia, arousal, and neuroleptic activity. This receptor mediates its action by association with G proteins that activate a phosphatidylinositol-calcium second messenger system. The sequence is that of Gastrin/cholecystokinin type B receptor (CCKBR) from Mastomys natalensis (African soft-furred rat).